Here is a 374-residue protein sequence, read N- to C-terminus: Type IV secretion system protein PtlG homolog (374 aa).

A helical transmembrane segment spans residues 38 to 56; that stretch reads WMFALVAVALSCLLATGIW. The tract at residues 86–117 is disordered; sequence HPREPEPAPLPDMPAAPDPILPQPRPAPPVPP. Residues 92-117 show a composition bias toward pro residues; that stretch reads PAPLPDMPAAPDPILPQPRPAPPVPP.

Belongs to the TrbI/VirB10 family.

Its subcellular location is the cell membrane. This Bordetella bronchiseptica (strain ATCC BAA-588 / NCTC 13252 / RB50) (Alcaligenes bronchisepticus) protein is Type IV secretion system protein PtlG homolog (ptlG).